The sequence spans 214 residues: MVGRLSLQDVPELVDAKKKGDGVLDSPDSGLPPSPSPSHWGLAAGGGGGERAAAPGTLEPDAAAATPAAPSPASLPLAPGCALRLCPLSFGEGVEFDPLPPKEVRYTSLVKYDSERHFIDDVQLPLGLAVASCSQTVTCVPNGTWRNYKAEVRFEPRHRPTRFLSTTIVYPKYPKAVYTTTLDYNCRKTLRRFLSSVELEAAELPGSDDLSDEC.

Residues 1 to 56 form a disordered region; it reads MVGRLSLQDVPELVDAKKKGDGVLDSPDSGLPPSPSPSHWGLAAGGGGGERAAAPG. A phosphoserine mark is found at S6 and S26.

Belongs to the Refilin family. As to quaternary structure, interacts with FLNA and FLNB.

The protein localises to the cytoplasm. It localises to the cytoskeleton. In terms of biological role, involved in the regulation of the perinuclear actin network and nuclear shape through interaction with filamins. Plays an essential role in the formation of cartilaginous skeletal elements. This chain is Refilin-B, found in Homo sapiens (Human).